The chain runs to 281 residues: UPF0294 protein VP2298 (281 aa).

This sequence belongs to the UPF0294 family.

The protein localises to the cytoplasm. This chain is UPF0294 protein VP2298, found in Vibrio parahaemolyticus serotype O3:K6 (strain RIMD 2210633).